The following is a 286-amino-acid chain: Phosphatidylserine decarboxylase proenzyme (286 aa).

Residues Asp-88, His-145, and Ser-251 each act as charge relay system; for autoendoproteolytic cleavage activity in the active site. Catalysis depends on Ser-251, which acts as the Schiff-base intermediate with substrate; via pyruvic acid; for decarboxylase activity. A Pyruvic acid (Ser); by autocatalysis modification is found at Ser-251.

The protein belongs to the phosphatidylserine decarboxylase family. PSD-B subfamily. Prokaryotic type I sub-subfamily. As to quaternary structure, heterodimer of a large membrane-associated beta subunit and a small pyruvoyl-containing alpha subunit. Requires pyruvate as cofactor. Post-translationally, is synthesized initially as an inactive proenzyme. Formation of the active enzyme involves a self-maturation process in which the active site pyruvoyl group is generated from an internal serine residue via an autocatalytic post-translational modification. Two non-identical subunits are generated from the proenzyme in this reaction, and the pyruvate is formed at the N-terminus of the alpha chain, which is derived from the carboxyl end of the proenzyme. The autoendoproteolytic cleavage occurs by a canonical serine protease mechanism, in which the side chain hydroxyl group of the serine supplies its oxygen atom to form the C-terminus of the beta chain, while the remainder of the serine residue undergoes an oxidative deamination to produce ammonia and the pyruvoyl prosthetic group on the alpha chain. During this reaction, the Ser that is part of the protease active site of the proenzyme becomes the pyruvoyl prosthetic group, which constitutes an essential element of the active site of the mature decarboxylase.

The protein localises to the cell membrane. It catalyses the reaction a 1,2-diacyl-sn-glycero-3-phospho-L-serine + H(+) = a 1,2-diacyl-sn-glycero-3-phosphoethanolamine + CO2. It participates in phospholipid metabolism; phosphatidylethanolamine biosynthesis; phosphatidylethanolamine from CDP-diacylglycerol: step 2/2. Functionally, catalyzes the formation of phosphatidylethanolamine (PtdEtn) from phosphatidylserine (PtdSer). This Verminephrobacter eiseniae (strain EF01-2) protein is Phosphatidylserine decarboxylase proenzyme.